Here is a 270-residue protein sequence, read N- to C-terminus: Glutamate racemase (270 aa).

Residues 15 to 16 and 47 to 48 each bind substrate; these read DS and YG. Cys-78 acts as the Proton donor/acceptor in catalysis. 79 to 80 is a substrate binding site; it reads NT. Cys-189 acts as the Proton donor/acceptor in catalysis. A substrate-binding site is contributed by 190-191; the sequence is TH.

Belongs to the aspartate/glutamate racemases family.

The catalysed reaction is L-glutamate = D-glutamate. Its pathway is cell wall biogenesis; peptidoglycan biosynthesis. Its function is as follows. Provides the (R)-glutamate required for cell wall biosynthesis. This is Glutamate racemase from Syntrophus aciditrophicus (strain SB).